Consider the following 307-residue polypeptide: Ras-related protein Rab-33 (307 aa).

The segment at 19-80 (VIDPPKHVTA…IPPAPEAVTA (62 aa)) is disordered. 2 stretches are compositionally biased toward pro residues: residues 42–56 (PTHPSAPQDPSPAVP) and 65–75 (PTAPPPIPPAP). 107–114 (GNAAVGKT) provides a ligand contact to GTP. Positions 129 to 137 (TEATIGVDF) match the Effector region motif. GTP contacts are provided by residues 155–159 (DTAGQ) and 217–220 (NKCD). S-geranylgeranyl cysteine attachment occurs at residues cysteine 306 and cysteine 307.

It belongs to the small GTPase superfamily. Rab family.

The protein resides in the cell membrane. This Caenorhabditis elegans protein is Ras-related protein Rab-33 (rab-33).